The primary structure comprises 383 residues: NifS-like protein (383 aa).

Pyridoxal 5'-phosphate-binding positions include 58 to 59 (SE) and 184 to 186 (SIN).

The protein belongs to the class-V pyridoxal-phosphate-dependent aminotransferase family. NifS/IscS subfamily. Pyridoxal 5'-phosphate is required as a cofactor.

The protein resides in the virion. The sequence is that of NifS-like protein from African swine fever virus (strain Badajoz 1971 Vero-adapted) (Ba71V).